The sequence spans 511 residues: Arginine-containing cyclodipeptide synthase eshA (511 aa).

The short motif at 413–417 (DDSAE) is the Conserved DDXXE motif element.

The protein belongs to the arginine-containing cyclodipeptide synthase family.

The catalysed reaction is L-arginyl-tRNA(Arg) + L-leucyl-tRNA(Leu) = cyclo(L-arginyl-L-leucyl) + tRNA(Arg) + tRNA(Leu) + 2 H(+). It functions in the pathway secondary metabolite biosynthesis. Arginine-containing cyclodipeptide synthase; part of the cluster that mediates the biosynthesis of a highly modified cyclo-arginine-leucine dipeptide (cRW). Within the pathway, eshA acts as the scaffold-generating enzyme and is responsible for formation of the cyclo-Arg-Leu diketopiperazine (cRL) from L-arginyl-tRNA(Arg) + L-Leucyl-tRNA(Leu). Additional enzymes from the cluster then further modify the cyclo-Arg-Leu diketopiperazine (cRW) scaffold. The polypeptide is Arginine-containing cyclodipeptide synthase eshA (Penicillium shearii (Eupenicillium shearii)).